Here is a 424-residue protein sequence, read N- to C-terminus: Enolase (424 aa).

Gln-164 is a (2R)-2-phosphoglycerate binding site. Glu-206 functions as the Proton donor in the catalytic mechanism. Mg(2+)-binding residues include Asp-243, Glu-284, and Asp-311. Positions 336, 365, 366, and 387 each coordinate (2R)-2-phosphoglycerate. Lys-336 serves as the catalytic Proton acceptor.

It belongs to the enolase family. It depends on Mg(2+) as a cofactor.

Its subcellular location is the cytoplasm. The protein resides in the secreted. The protein localises to the cell surface. It carries out the reaction (2R)-2-phosphoglycerate = phosphoenolpyruvate + H2O. The protein operates within carbohydrate degradation; glycolysis; pyruvate from D-glyceraldehyde 3-phosphate: step 4/5. Its function is as follows. Catalyzes the reversible conversion of 2-phosphoglycerate (2-PG) into phosphoenolpyruvate (PEP). It is essential for the degradation of carbohydrates via glycolysis. This chain is Enolase, found in Wolbachia sp. subsp. Drosophila simulans (strain wRi).